Consider the following 92-residue polypeptide: LYR motif-containing protein 4 homolog (92 aa).

Residues 40–68 adopt a coiled-coil conformation; sequence ANKAIRDFAEIDRQMEAGKQNLELIRRQV.

The protein belongs to the complex I LYR family. As to quaternary structure, component of the mitochondrial core iron-sulfur cluster (ISC) assembly complex at least composed of the cysteine desulfurase Nfs1, the scaffold protein IscU, the accessory protein bcn92/Isd11/Lyrm4, and probably fh/frataxin. Interacts with Nfs1.

Its subcellular location is the mitochondrion. In terms of biological role, stabilizing factor of the core iron-sulfur cluster (ISC) assembly complex that regulates the stability and cysteine desulfurase activity of Nfs1 and participates in the [2Fe-2S] clusters assembly on the scaffolding protein IscU. The polypeptide is LYR motif-containing protein 4 homolog (Drosophila subobscura (Fruit fly)).